The primary structure comprises 1346 residues: DNA-directed RNA polymerase subunit beta (1346 aa).

Belongs to the RNA polymerase beta chain family. In terms of assembly, the RNAP catalytic core consists of 2 alpha, 1 beta, 1 beta' and 1 omega subunit. When a sigma factor is associated with the core the holoenzyme is formed, which can initiate transcription.

It catalyses the reaction RNA(n) + a ribonucleoside 5'-triphosphate = RNA(n+1) + diphosphate. In terms of biological role, DNA-dependent RNA polymerase catalyzes the transcription of DNA into RNA using the four ribonucleoside triphosphates as substrates. The chain is DNA-directed RNA polymerase subunit beta from Psychromonas ingrahamii (strain DSM 17664 / CCUG 51855 / 37).